Here is a 1409-residue protein sequence, read N- to C-terminus: L-2-aminoadipate reductase large subunit (1409 aa).

A Carrier domain is found at glutamine 858–leucine 937. Serine 896 carries the O-(pantetheine 4'-phosphoryl)serine modification.

It belongs to the ATP-dependent AMP-binding enzyme family. As to quaternary structure, heterodimer of an alpha and a beta subunit. Pantetheine 4'-phosphate is required as a cofactor.

It catalyses the reaction (S)-2-amino-6-oxohexanoate + NADP(+) + H2O = L-2-aminoadipate + NADPH + 2 H(+). The catalysed reaction is (S)-2-amino-6-oxohexanoate + NAD(+) + H2O = L-2-aminoadipate + NADH + 2 H(+). It carries out the reaction (S)-2-amino-6-oxohexanoate + AMP + diphosphate + NADP(+) = L-2-aminoadipate + ATP + NADPH + H(+). The protein operates within amino-acid biosynthesis; L-lysine biosynthesis via AAA pathway; L-lysine from L-alpha-aminoadipate (fungal route): step 1/3. Catalyzes the activation of alpha-aminoadipate by ATP-dependent adenylation and the reduction of activated alpha-aminoadipate by NADPH. The activated alpha-aminoadipate is bound to the phosphopantheinyl group of the enzyme itself before it is reduced to (S)-2-amino-6-oxohexanoate. This is L-2-aminoadipate reductase large subunit (lys2) from Penicillium chrysogenum (Penicillium notatum).